A 197-amino-acid polypeptide reads, in one-letter code: Viral polyamine acetyltransferase (197 aa).

Position 22 (Asn22) interacts with acetyl-CoA. Glu27 is a catalytic residue. Positions 102–182 (SYTPDDKCLY…YQYGITKPFD (81 aa)) constitute an N-acetyltransferase domain. Residues Ile115, Ser117, Gly121, Gly123, Ala125, Thr126, Thr149, Asn150, and Lys159 each contribute to the acetyl-CoA site.

The protein belongs to the acetyltransferase family.

The enzyme catalyses spermine + acetyl-CoA = N(1)-acetylspermine + CoA + H(+). It carries out the reaction spermidine + acetyl-CoA = N(1)-acetylspermidine + CoA + H(+). The catalysed reaction is spermidine + acetyl-CoA = N(8)-acetylspermidine + CoA + H(+). It catalyses the reaction putrescine + acetyl-CoA = N-acetylputrescine + CoA + H(+). The enzyme catalyses cadaverine + acetyl-CoA = N-acetylcadaverine + CoA + H(+). It carries out the reaction sym-homospermidine + acetyl-CoA = N(1)-acetyl-sym-homospermidine + CoA + H(+). In terms of biological role, acetylates polyamines such as spermine, spermidine, cadaverine, homospermidine and putrescine (the latter with low efficiency). May play a role in the regulation of polyamine catabolism in the host during viral replication. The protein is Viral polyamine acetyltransferase of Chlorella (PBCV-1).